Reading from the N-terminus, the 394-residue chain is Elongation factor Tu 2 (394 aa).

The tr-type G domain occupies 10-204 (KPHVNVGTIG…ALDTYIPEPA (195 aa)). The G1 stretch occupies residues 19 to 26 (GHVDHGKT). 19–26 (GHVDHGKT) provides a ligand contact to GTP. Thr26 is a Mg(2+) binding site. The segment at 60–64 (GITIN) is G2. The G3 stretch occupies residues 81 to 84 (DCPG). GTP contacts are provided by residues 81–85 (DCPGH) and 136–139 (NKCD). Residues 136–139 (NKCD) are G4. The interval 174-176 (SAL) is G5.

This sequence belongs to the TRAFAC class translation factor GTPase superfamily. Classic translation factor GTPase family. EF-Tu/EF-1A subfamily. As to quaternary structure, monomer.

It is found in the cytoplasm. It carries out the reaction GTP + H2O = GDP + phosphate + H(+). In terms of biological role, GTP hydrolase that promotes the GTP-dependent binding of aminoacyl-tRNA to the A-site of ribosomes during protein biosynthesis. The chain is Elongation factor Tu 2 from Shewanella frigidimarina (strain NCIMB 400).